The primary structure comprises 376 residues: Flagellin B (376 aa).

Residues 103 to 130 (SNSSSERQAIQEEVSALNDELNRIAETT) are a coiled coil.

Belongs to the bacterial flagellin family. In terms of assembly, heteromer of multiple flagellin subunits including FlaA, FlaB, FlaC, FlaD and possibly FlaE.

It localises to the secreted. Its subcellular location is the bacterial flagellum. Its function is as follows. Flagellin is the subunit protein which polymerizes to form the filaments of bacterial flagella. FlaB is not essential for flagellar synthesis and motility. The protein is Flagellin B (flaB) of Vibrio anguillarum (Listonella anguillarum).